The chain runs to 198 residues: MYDYIKGQLTKITAKYIVVETNGLGYIINVANPYSFTDSVNQLVTIYLHQVIREDAHLLFGFHTEDEKDVFLKLISVSGIGPTTALAIVAVDDNEGLVNAIDNSDIKYLMKFPKIGKKTAQQMVLDLAGKFVEAPQETGNTKARSNKAGNTQLDEAIEALLALGYKATELKKIRAFFEGTSETAEQYIKSALKLLMKG.

A domain I region spans residues M1 to H63. Residues T64–K142 are domain II. A flexible linker region spans residues A143–K147. The segment at A148–G198 is domain III.

This sequence belongs to the RuvA family. Homotetramer. Forms an RuvA(8)-RuvB(12)-Holliday junction (HJ) complex. HJ DNA is sandwiched between 2 RuvA tetramers; dsDNA enters through RuvA and exits via RuvB. An RuvB hexamer assembles on each DNA strand where it exits the tetramer. Each RuvB hexamer is contacted by two RuvA subunits (via domain III) on 2 adjacent RuvB subunits; this complex drives branch migration. In the full resolvosome a probable DNA-RuvA(4)-RuvB(12)-RuvC(2) complex forms which resolves the HJ.

It localises to the cytoplasm. Its function is as follows. The RuvA-RuvB-RuvC complex processes Holliday junction (HJ) DNA during genetic recombination and DNA repair, while the RuvA-RuvB complex plays an important role in the rescue of blocked DNA replication forks via replication fork reversal (RFR). RuvA specifically binds to HJ cruciform DNA, conferring on it an open structure. The RuvB hexamer acts as an ATP-dependent pump, pulling dsDNA into and through the RuvAB complex. HJ branch migration allows RuvC to scan DNA until it finds its consensus sequence, where it cleaves and resolves the cruciform DNA. This chain is Holliday junction branch migration complex subunit RuvA, found in Streptococcus pyogenes serotype M12 (strain MGAS2096).